The sequence spans 145 residues: Endosomal/vacuolar adapter protein YPT35 (145 aa).

Residues Ile-32–Gly-145 form the PX domain.

It belongs to the YPT35 family.

It localises to the endosome membrane. The protein localises to the vacuole membrane. Recruits the lipid transfer protein VPS13 to endosomal and vacuolar membranes. The chain is Endosomal/vacuolar adapter protein YPT35 (YPT35) from Meyerozyma guilliermondii (strain ATCC 6260 / CBS 566 / DSM 6381 / JCM 1539 / NBRC 10279 / NRRL Y-324) (Yeast).